A 1859-amino-acid polypeptide reads, in one-letter code: U3 small nucleolar RNA-associated protein 10 (1859 aa).

Residues 258-278 (LGAYSVLAVLSAVAPLSIELL) form a helical membrane-spanning segment. The stretch at 578–616 (VLPLLLIAFNDPSSHIRAAFAQLVQLVSEITKAIHENKK) is one HEAT 1 repeat. Residues 1392 to 1412 (IVIASISAIVSIVNVLGIKTL) traverse the membrane as a helical segment. Residues 1819–1857 (LVPHIAELLEDDDEAVEIEVREGLVRVIEKVLGEPLDRY) form an HEAT 2 repeat.

Belongs to the HEATR1/UTP10 family. In terms of assembly, component of the ribosomal small subunit (SSU) processome.

It is found in the nucleus. It localises to the nucleolus. The protein localises to the membrane. Its function is as follows. Involved in nucleolar processing of pre-18S ribosomal RNA. Involved in ribosome biosynthesis. The sequence is that of U3 small nucleolar RNA-associated protein 10 from Lodderomyces elongisporus (strain ATCC 11503 / CBS 2605 / JCM 1781 / NBRC 1676 / NRRL YB-4239) (Yeast).